The following is a 628-amino-acid chain: Beta-galactosidase large subunit (628 aa).

E468 serves as the catalytic Proton donor. E536 functions as the Nucleophile in the catalytic mechanism.

It belongs to the glycosyl hydrolase 2 family. Heterodimer of a large (LacL) and a small subunit (LacM).

The catalysed reaction is Hydrolysis of terminal non-reducing beta-D-galactose residues in beta-D-galactosides.. Its function is as follows. Component of a beta-galactosidase. The chain is Beta-galactosidase large subunit from Lactobacillus helveticus (Lactobacillus suntoryeus).